A 469-amino-acid polypeptide reads, in one-letter code: Glutamate--tRNA ligase (469 aa).

A 'HIGH' region motif is present at residues 11–21 (PSPTGFIHLGN). Residues 243–247 (KMSKR) carry the 'KMSKS' region motif. K246 serves as a coordination point for ATP.

This sequence belongs to the class-I aminoacyl-tRNA synthetase family. Glutamate--tRNA ligase type 1 subfamily. As to quaternary structure, monomer.

It localises to the cytoplasm. It carries out the reaction tRNA(Glu) + L-glutamate + ATP = L-glutamyl-tRNA(Glu) + AMP + diphosphate. Catalyzes the attachment of glutamate to tRNA(Glu) in a two-step reaction: glutamate is first activated by ATP to form Glu-AMP and then transferred to the acceptor end of tRNA(Glu). The protein is Glutamate--tRNA ligase of Burkholderia orbicola (strain AU 1054).